The chain runs to 295 residues: Excinuclease cho (295 aa).

The region spanning 33-108 (TRPGVYLFHG…IKEQQPLFNK (76 aa)) is the GIY-YIG domain.

Incises the DNA at the 3' side of a lesion during nucleotide excision repair. Incises the DNA farther away from the lesion than UvrC. Not able to incise the 5' site of a lesion. When a lesion remains because UvrC is not able to induce the 3' incision, Cho incises the DNA. Then UvrC makes the 5' incision. The combined action of Cho and UvrC broadens the substrate range of nucleotide excision repair. This chain is Excinuclease cho (cho), found in Shigella flexneri.